The chain runs to 356 residues: Fructose-bisphosphate aldolase 1, chloroplastic (356 aa).

The N-terminal 6 residues, 1 to 6, are a transit peptide targeting the chloroplast; it reads GLTIRA. Substrate is bound by residues arginine 53 and lysine 143. Glutamate 183 functions as the Proton acceptor in the catalytic mechanism. Lysine 225 (schiff-base intermediate with dihydroxyacetone-P) is an active-site residue.

This sequence belongs to the class I fructose-bisphosphate aldolase family.

It localises to the plastid. Its subcellular location is the chloroplast. The catalysed reaction is beta-D-fructose 1,6-bisphosphate = D-glyceraldehyde 3-phosphate + dihydroxyacetone phosphate. It participates in carbohydrate degradation; glycolysis; D-glyceraldehyde 3-phosphate and glycerone phosphate from D-glucose: step 4/4. The protein is Fructose-bisphosphate aldolase 1, chloroplastic of Pisum sativum (Garden pea).